Here is a 434-residue protein sequence, read N- to C-terminus: Putative ZDHHC-type palmitoyltransferase 1 (434 aa).

Transmembrane regions (helical) follow at residues 25-45 and 53-73; these read AYFIVAMILMLIPEIPFLIFV and ITAAIYPVSIYFWIASYIFLI. The 51-residue stretch at 115 to 165 folds into the DHHC domain; that stretch reads KWCETCCLYRPPRANHCGICNNCVERFDHHCPWVGNCIGRRNYQTFLYFLY. Cys-145 functions as the S-palmitoyl cysteine intermediate in the catalytic mechanism. The helical transmembrane segment at 160–180 threads the bilayer; that stretch reads FLYFLYSLGFLCIWIMGFCVA. 9 N-linked (GlcNAc...) asparagine glycosylation sites follow: Asn-207, Asn-216, Asn-274, Asn-346, Asn-362, Asn-373, Asn-381, Asn-387, and Asn-393. The interval 262 to 330 is disordered; the sequence is TIPTPNNING…ISPPQMLQRQ (69 aa). Over residues 267–316 the composition is skewed to low complexity; sequence NNINGNNNNSINNNNNNNNNNNNNNNNNNNNNNNNNNINNGNSGGTTNNG. The disordered stretch occupies residues 365–434; sequence TISEDKPKNL…SLNHELQVNV (70 aa). Residues 373–387 show a composition bias toward low complexity; that stretch reads NLSNSNNNNNTNNKN. The segment covering 409–419 has biased composition (basic and acidic residues); that stretch reads DDFKSDNDKEI. Asn-420 carries an N-linked (GlcNAc...) asparagine glycan. Over residues 420-434 the composition is skewed to polar residues; that stretch reads NSSSLSLNHELQVNV.

This sequence belongs to the DHHC palmitoyltransferase family.

The protein resides in the membrane. It carries out the reaction L-cysteinyl-[protein] + hexadecanoyl-CoA = S-hexadecanoyl-L-cysteinyl-[protein] + CoA. The sequence is that of Putative ZDHHC-type palmitoyltransferase 1 from Dictyostelium discoideum (Social amoeba).